We begin with the raw amino-acid sequence, 172 residues long: uncharacterized protein (172 aa).

The segment covering 1-17 has biased composition (basic and acidic residues); the sequence is MISLDKDENEIEHHNEE. A disordered region spans residues 1-27; that stretch reads MISLDKDENEIEHHNEENSLVEQETAP. Residues 129 to 151 traverse the membrane as a helical segment; that stretch reads IVTVLIGIIVAIFVLVVIGIAAF.

It localises to the membrane. This is an uncharacterized protein from Bacillus subtilis (strain 168).